The following is an 891-amino-acid chain: Longitudinals lacking protein, isoform G (891 aa).

The BTB domain occupies 32–97 (VDCTLAAEGK…MYRGEVNISQ (66 aa)). Disordered regions lie at residues 115 to 200 (LSDN…SSVL) and 228 to 340 (SSGP…ASAS). A Phosphoserine modification is found at S140. A Phosphothreonine modification is found at T161. Residues S162 and S168 each carry the phosphoserine modification. Low complexity-rich tracts occupy residues 162-175 (SGDV…SSSP), 228-251 (SSGP…LTST), 263-293 (TSST…QTTS), and 329-340 (NSATGPNPASAS). Phosphoserine is present on residues S372, S375, and S378. Residues 446–467 (QDAQQRDPQDLSRKENTAPDVA) are disordered. Residues 449–462 (QQRDPQDLSRKENT) show a composition bias toward basic and acidic residues. Phosphoserine occurs at positions 696 and 705. T706 carries the phosphothreonine modification. Residues S749 and S750 each carry the phosphoserine modification. A C2H2-type 1; degenerate zinc finger spans residues 791–813 (YECRHCGKKYRWKSTLRRHENVE). Residues 821-843 (HQCPYCPYKSKQRGNLGVHVRKH) form a C2H2-type 2 zinc finger. Positions 840 to 891 (VRKHHTDLPQLPSKRRSKYSMNRENGMSGSMSDDSQGKLIIDFNGKGELETK) are disordered. At S874 the chain carries Phosphoserine.

As to expression, expressed in both mesoderm and ectoderm with expression highest in the mesectoderm by stage 11. Becomes enriched in a cluster of brain cells, in abdominal histoblasts, and in the embryonic imaginal disks during later stages.

The protein localises to the nucleus. Putative transcription factor required for axon growth and guidance in the central and peripheral nervous systems. Repels CNS axons away from the midline by promoting the expression of the midline repellent sli and its receptor robo. This Drosophila melanogaster (Fruit fly) protein is Longitudinals lacking protein, isoform G.